Reading from the N-terminus, the 240-residue chain is Probable ATP synthase 24 kDa subunit, mitochondrial (240 aa).

Residues Met-1 to Phe-32 constitute a mitochondrion transit peptide. Composition is skewed to basic and acidic residues over residues Ala-210–Glu-222 and Pro-229–Ile-240. The disordered stretch occupies residues Ala-210–Ile-240.

It is found in the mitochondrion. The protein localises to the mitochondrion inner membrane. Functionally, mitochondrial membrane ATP synthase (F(1)F(0) ATP synthase or Complex V) produces ATP from ADP in the presence of a proton gradient across the membrane which is generated by electron transport complexes of the respiratory chain. F-type ATPases consist of two structural domains, F(1) - containing the extramembraneous catalytic core and F(0) - containing the membrane proton channel, linked together by a central stalk and a peripheral stalk. During catalysis, ATP synthesis in the catalytic domain of F(1) is coupled via a rotary mechanism of the central stalk subunits to proton translocation. Part of the complex F(0) domain. In Arabidopsis thaliana (Mouse-ear cress), this protein is Probable ATP synthase 24 kDa subunit, mitochondrial.